Here is a 36-residue protein sequence, read N- to C-terminus: Pancreatic polypeptide (36 aa).

Tyrosine 36 carries the post-translational modification Tyrosine amide.

It belongs to the NPY family.

It localises to the secreted. Its function is as follows. Hormone secreted by pancreatic cells that acts as a regulator of pancreatic and gastrointestinal functions probably by signaling through the G protein-coupled receptor NPY4R2. The protein is Pancreatic polypeptide (PPY) of Equus przewalskii (Przewalski's horse).